The following is a 457-amino-acid chain: Squalene epoxidase erg1 (457 aa).

FAD-binding positions include Ile-15 to Thr-16, Glu-35 to Arg-36, Arg-43, Arg-114, Val-130, Asp-293, and Met-306. The next 3 membrane-spanning stretches (helical) occupy residues Gly-347 to Thr-364, Phe-409 to Met-429, and Ile-433 to Ser-453.

Belongs to the squalene monooxygenase family. FAD is required as a cofactor.

The protein localises to the microsome membrane. The protein resides in the endoplasmic reticulum membrane. Its subcellular location is the vacuole membrane. The enzyme catalyses squalene + reduced [NADPH--hemoprotein reductase] + O2 = (S)-2,3-epoxysqualene + oxidized [NADPH--hemoprotein reductase] + H2O + H(+). The protein operates within terpene metabolism; lanosterol biosynthesis; lanosterol from farnesyl diphosphate: step 2/3. Its pathway is steroid metabolism; ergosterol biosynthesis. Its activity is regulated as follows. Activity is blocked by the allylamine class antifungal terbinafine. Squalene epoxidase; part of the third module of ergosterol biosynthesis pathway that includes by the late steps of the pathway. Erg1 catalyzes the epoxidation of squalene into 2,3-epoxysqualene. The third module or late pathway involves the ergosterol synthesis itself through consecutive reactions that mainly occur in the endoplasmic reticulum (ER) membrane. Firstly, the squalene synthase erg9 catalyzes the condensation of 2 farnesyl pyrophosphate moieties to form squalene, which is the precursor of all steroids. Secondly, squalene is converted into lanosterol by the consecutive action of the squalene epoxidase erg1 and the lanosterol synthase erg7. The lanosterol 14-alpha-demethylase erg11/cyp1 catalyzes C14-demethylation of lanosterol to produce 4,4'-dimethyl cholesta-8,14,24-triene-3-beta-ol. In the next steps, a complex process involving various demethylation, reduction and desaturation reactions catalyzed by the C-14 reductase erg24 and the C-4 demethylation complex erg25-erg26-erg27 leads to the production of zymosterol. Erg28 likely functions in the C-4 demethylation complex reaction by tethering erg26 and Erg27 to the endoplasmic reticulum or to facilitate interaction between these proteins. Then, the sterol 24-C-methyltransferase erg6 catalyzes the methyl transfer from S-adenosyl-methionine to the C-24 of zymosterol to form fecosterol. The C-8 sterol isomerase erg2 catalyzes the reaction which results in unsaturation at C-7 in the B ring of sterols and thus converts fecosterol to episterol. The sterol-C5-desaturases erg31 and erg32 then catalyze the introduction of a C-5 double bond in the B ring to produce 5-dehydroepisterol. The C-22 sterol desaturase erg5 further converts 5-dehydroepisterol into ergosta-5,7,22,24(28)-tetraen-3beta-ol by forming the C-22(23) double bond in the sterol side chain. Finally, ergosta-5,7,22,24(28)-tetraen-3beta-ol is substrate of the C-24(28) sterol reductase erg4 to produce ergosterol. In the genus Schizosaccharomyces, a second route exists between lanosterol and fecosterol, via the methylation of lanosterol to eburicol by erg6, followed by C14-demethylation by erg11/cyp1 and C4-demethylation by the demethylation complex erg25-erg26-erg27. The polypeptide is Squalene epoxidase erg1 (Schizosaccharomyces pombe (strain 972 / ATCC 24843) (Fission yeast)).